A 158-amino-acid polypeptide reads, in one-letter code: uncharacterized protein (158 aa).

This is an uncharacterized protein from Acidianus convivator (ABV).